Here is an 870-residue protein sequence, read N- to C-terminus: UvrABC system protein B (870 aa).

Residues glutamate 20 to threonine 410 enclose the Helicase ATP-binding domain. Glycine 33–threonine 40 contributes to the ATP binding site. A Beta-hairpin motif is present at residues tyrosine 86–isoleucine 109. The Helicase C-terminal domain maps to glutamine 425–leucine 591. In terms of domain architecture, UVR spans lysine 620–methionine 655. Disordered regions lie at residues glutamate 671–phenylalanine 698 and alanine 741–lysine 870. A compositionally biased stretch (basic residues) spans lysine 679–histidine 689. Basic and acidic residues-rich tracts occupy residues asparagine 793–glutamate 808 and threonine 827–alanine 836. Positions glutamate 858–lysine 870 are enriched in basic residues.

Belongs to the UvrB family. Forms a heterotetramer with UvrA during the search for lesions. Interacts with UvrC in an incision complex.

The protein resides in the cytoplasm. The UvrABC repair system catalyzes the recognition and processing of DNA lesions. A damage recognition complex composed of 2 UvrA and 2 UvrB subunits scans DNA for abnormalities. Upon binding of the UvrA(2)B(2) complex to a putative damaged site, the DNA wraps around one UvrB monomer. DNA wrap is dependent on ATP binding by UvrB and probably causes local melting of the DNA helix, facilitating insertion of UvrB beta-hairpin between the DNA strands. Then UvrB probes one DNA strand for the presence of a lesion. If a lesion is found the UvrA subunits dissociate and the UvrB-DNA preincision complex is formed. This complex is subsequently bound by UvrC and the second UvrB is released. If no lesion is found, the DNA wraps around the other UvrB subunit that will check the other stand for damage. The polypeptide is UvrABC system protein B (Mesorhizobium japonicum (strain LMG 29417 / CECT 9101 / MAFF 303099) (Mesorhizobium loti (strain MAFF 303099))).